Consider the following 3336-residue polypeptide: MEVEQEQRRRKVEAGRTKLAHFRQRKTKGDSSHSEKKTAKRKGSAVDASVQEESPVTKEDSALCGGGDICKSTSCDDTPDGAGGAFAAQPEDCDGEKREDLEQLQQKQVNDHPPEQCGMFTVSDHPPEQHGMFTVGDHPPEQRGMFTVSDHPPEQHGMFTVSDHPPEQRGMFTISDHQPEQRGMFTVSDHTPEQRGIFTISDHPAEQRGMFTKECEQECELAITDLESGREDEAGLHQSQAVHGLELEALRLSLSNMHTAQLELTQANLQKEKETALTELREMLNSRRAQELALLQSRQQHELELLREQHAREKEEVVLRCGQEAAELKEKLQSEMEKNAQIVKTLKEDWESEKDLCLENLRKELSAKHQSEMEDLQNQFQKELAEQRAELEKIFQDKNQAERALRNLESHHQAAIEKLREDLQSEHGRCLEDLEFKFKESEKEKQLELENLQASYEDLKAQSQEEIRRLWSQLDSARTSRQELSELHEQLLARTSRVEDLEQLKQREKTQHESELEQLRIYFEKKLRDAEKTYQEDLTLLQQRLQGAREDALLDSVEVGLSCVGLEEKPEKGRKDHVDELEPERHKESLPRFQAELEESHRHQLEALESPLCIQHEGHVSDRCCVETSALGHEWRLEPSEGHSQELPWVHLQGVQDGDLEADTERAARVLGLETEHKVQLSLLQTELKEEIELLKIENRNLYGKLQHETRLKDDLEKVKHNLIEDHQKELNNAKQKTELMKQEFQRKETDWKVMKEELQREAEEKLTLMLLELREKAESEKQTIINKFELREAEMRQLQDQQAAQILDLERSLTEQQGRLQQLEQDLTSDDALHCSQCGREPPTAQDGELAALHVKEDCALQLMLARSRFLEERKEITEKFSAEQDAFLQEAQEQHARELQLLQERHQQQLLSVTAELEARHQAALGELTASLESKQGALLAARVAELQTKHAADLGALETRHLSSLDSLESCYLSEFQTIREEHRQALELLRADFEEQLWKKDSLHQTILTQELEKLKRKHEGELQSVRDHLRTEVSTELAGTVAHELQGVHQGEFGSEKKTALHEKEETLRLQSAQAQPFHQEEKESLSLQLQKKNHQVQQLKDQVLSLSHEIEECRSELEVLQQRRERENREGANLLSMLKADVNLSHSERGALQDALRRLLGLFGETLRAAVTLRSRIGERVGLCLDDAGAGLALSTAPALEETWSDVALPELDRTLSECAEMSSVAEISSHMRESFLMSPESVRECEQPIRRVFQSLSLAVDGLMEMALDSSRQLEEARQIHSRFEKEFSFKNEETAQVVRKHQELLECLKEESAAKAELALELHKTQGTLEGFKVETADLKEVLAGKEDSEHRLVLELESLRRQLQQAAQEQAALREECTRLWSRGEATATDAEAREAALRKEVEDLTKEQSETRKQAEKDRSALLSQMKILESELEEQLSQHRGCAKQAEAVTALEQQVASLDKHLRNQRQFMDEQAAEREHEREEFQQEIQRLEGQLRQAAKPQPWGPRDSQQAPLDGEVELLQQKLREKLDEFNELAIQKESADRQVLMQEEEIKRLEEMNINIRKKVAQLQEEVEKQKNIVKGLEQDKEVLKKQQMSSLLLASTLQSTLDAGRCPEPPSGSPPEGPEIQLEVTQRALLRRESEVLDLKEQLEKMKGDLESKNEEILHLNLKLDMQNSQTAVSLRELEEENTSLKVIYTRSSEIEELKATIENLQENQKRLQKEKAEEIEQLHEVIEKLQHELSLMGPVVHEVSDSQAGSLQSELLCSQAGGPRGQALQGELEAALEAKEALSRLLADQERRHSQALEALQQRLQGAEEAAELQLAELERNVALREAEVEDMASRIQEFEAALKAKEATIAERNLEIDALNQRKAAHSAELEAVLLALARIRRALEQQPLAAGAAPPELQWLRAQCARLSRQLQVLHQRFLRCQVELDRRQARRATAHTRVPGAHPQPRMDGGAKAQVTGDVEASHDAALEPVVPDPQGDLQPVLVTLKDAPLCKQEGVMSVLTVCQRQLQSELLLVKNEMRLSLEDGGKGKEKVLEDCQLPKVDLVAQVKQLQEKLNRLLYSMTFQNVDAADTKSLWPMASAHLLESSWSDDSCDGEEPDISPHIDTCDANTATGGVTDVIKNQAIDACDANTTPGGVTDVIKNWDSLIPDEMPDSPIQEKSECQDMSLSSPTSVLGGSRHQSHTAEAGPRKSPVGMLDLSSWSSPEVLRKDWTLEPWPSLPVTPHSGALSLCSADTSLGDRADTSLPQTQGPGLLCSPGVSAAALALQWAESPPADDHHVQRTAVEKDVEDFITTSFDSQETLSSPPPGLEGKADRSEKSDGSGFGARLSPGSGGPEAQTAGPVTPASISGRFQPLPEAMKEKEVRPKHVKALLQMVRDESHQILALSEGLAPPSGEPHPPRKEDEIQDISLHGGKTQEVPTACPDWRGDLLQVVQEAFEKEQEMQGVELQPRLSGSDLGGHSSLLERLEKIIREQGDLQEKSLEHLRLPDRSSLLSEIQALRAQLRMTHLQNQEKLQHLRTALTSAEARGSQQEHQLRRQVELLAYKVEQEKCIAGDLQKTLSEEQEKANSVQKLLAAEQTVVRDLKSDLCESRQKSEQLSRSLCEVQQEVLQLRSMLSSKENELKAALQELESEQGKGRALQSQLEEEQLRHLQRESQSAKALEELRASLETQRAQSSRLCVALKHEQTAKDNLQKELRIEHSRCEALLAQERSQLSELQKDLAAEKSRTLELSEALRHERLLTEQLSQRTQEACVHQDTQAHHALLQKLKEEKSRVVDLQAMLEKVQQQALHSQQQLEAEAQKHCEALRREKEVSATLKSTVEALHTQKRELRCSLEREREKPAWLQAELEQSHPRLKEQEGRKAARRSAEARQSPAAAEQWRKWQRDKEKLRELELQRQRDLHKIKQLQQTVRDLESKDEVPGSRLHLGSARRAAGSDADHLREQQRELEAMRQRLLSAARLLTSFTSQAVDRTVNDWTSSNEKAVMSLLHTLEELKSDLSRPTSSQKKMAAELQFQFVDVLLKDNVSLTKALSTVTQEKLELSRAVSKLEKLLKHHLQKGCSPSRSERSAWKPDETAPQSSLRRPDPGRLPPAASEEAHTSNVKMEKLYLHYLRAESFRKALIYQKKYLLLLIGGFQDSEQETLSMIAHLGVFPSKAERKITSRPFTRFRTAVRVVIAILRLRFLVKKWQEVDRKGALAQGKAPRPGPRARQPQSPPRTRESPPTRDVPSGHTRDPARGRRLAAAASPHSGGRATPSPNSRLERSLTASQDPEHSLTEYIHHLEVIQQRLGGVLPDSTSKKSCHPMIKQ.

Disordered regions lie at residues methionine 1–lysine 71 and glycine 81–aspartate 100. A compositionally biased stretch (basic and acidic residues) spans threonine 27–lysine 37. Serine 44 is modified (phosphoserine). At serine 188 the chain carries Phosphoserine. Threonine 191 is subject to Phosphothreonine. A coiled-coil region spans residues histidine 258–leucine 553. The interval lysine 569–serine 589 is disordered. 2 positions are modified to phosphoserine: serine 610 and serine 682. Coiled-coil stretches lie at residues threonine 675–histidine 835 and threonine 1010–alanine 1146. Position 1245 is a phosphoserine (serine 1245). A coiled-coil region spans residues asparagine 1299 to arginine 1949. The interval threonine 1619–glutamate 1638 is disordered. Positions proline 1626–glycine 1636 are enriched in pro residues. Phosphoserine occurs at positions 1653 and 1712. Residues arginine 1954–alanine 1974 form a disordered region. Serine 2044 carries the post-translational modification Phosphoserine. Residues valine 2064–tyrosine 2082 adopt a coiled-coil conformation. Positions serine 2168 to serine 2214 are disordered. Residues serine 2177, serine 2192, serine 2225, serine 2226, and serine 2327 each carry the phosphoserine modification. Residues glutamine 2186–leucine 2197 show a composition bias toward polar residues. Residues serine 2318–arginine 2374 are disordered. Positions glycine 2334–aspartate 2343 are enriched in basic and acidic residues. 4 positions are modified to phosphoserine: serine 2352, serine 2355, serine 2477, and serine 2486. Residues glutamine 2536–lysine 3086 adopt a coiled-coil conformation. 2 disordered regions span residues leucine 2875–tryptophan 2910 and leucine 3084–histidine 3126. 2 stretches are compositionally biased toward basic and acidic residues: residues glutamate 2876–glutamate 2896 and arginine 3092–glutamate 3102. Residues leucine 2983–threonine 3246 form an interaction with NEK2 region. The interval arginine 3195–arginine 3208 is calmodulin-binding. A disordered region spans residues alanine 3224–glutamate 3300. Positions alanine 3226–proline 3240 are enriched in low complexity. Residues proline 3283–glutamine 3297 are compositionally biased toward polar residues. Phosphoserine is present on serine 3302.

In terms of assembly, interacts with CHD3. Interacts with CHD4; the interaction regulates centrosome integrity. Interacts with DISC1 and PCM1. Binds calmodulin. Interacts with CDK5RAP2; the interaction is leading to centrosomal localization of PCNT and CDK5RAP2. Interacts with isoform 1 of NEK2. Interacts with CEP131. Interacts with CCDC13. Interacts with CEP68. Interacts with ATF5; the ATF5:PCNT:polyglutamylated tubulin (PGT) tripartite unites the mother centriole and the pericentriolar material (PCM) in the centrosome. In terms of processing, cleaved during mitotis which leads to removal of CDK5RAP2 from the centrosome and promotes centriole disengagement and subsequent centriole separation. The C-terminal fragment is rapidly degraded following cleavage. Ubiquitinated by TRIM43; leading to proteasomal degradation. Expressed in all tissues tested, including placenta, liver, kidney and thymus.

The protein localises to the cytoplasm. Its subcellular location is the cytoskeleton. It localises to the microtubule organizing center. The protein resides in the centrosome. In terms of biological role, integral component of the filamentous matrix of the centrosome involved in the initial establishment of organized microtubule arrays in both mitosis and meiosis. Plays a role, together with DISC1, in the microtubule network formation. Is an integral component of the pericentriolar material (PCM). May play an important role in preventing premature centrosome splitting during interphase by inhibiting NEK2 kinase activity at the centrosome. The protein is Pericentrin (PCNT) of Homo sapiens (Human).